Here is a 763-residue protein sequence, read N- to C-terminus: Phospholipid phosphatase-related protein type 4 (763 aa).

A disordered region spans residues 33–54 (VHTSPGGGRRPGQAAGMSAKER). Serine 36 bears the Phosphoserine mark. A run of 3 helical transmembrane segments spans residues 67 to 87 (LPCF…SLYF), 119 to 139 (AIPF…TIMV), and 178 to 198 (FVGV…IIQL). Residues asparagine 214 and asparagine 219 are each glycosylated (N-linked (GlcNAc...) asparagine). The helical transmembrane segment at 247–267 (SFPSQHATLAAFAAVYVSMYF) threads the bilayer. N-linked (GlcNAc...) asparagine glycosylation is present at asparagine 268. The next 2 helical transmembrane spans lie at 276–296 (KLLK…CGLT) and 308–328 (VYCG…YAVG). Serine 346 carries the post-translational modification Phosphoserine. The N-linked (GlcNAc...) asparagine glycan is linked to asparagine 362. The residue at position 385 (serine 385) is a Phosphoserine. N-linked (GlcNAc...) asparagine glycosylation occurs at asparagine 432. The residue at position 438 (serine 438) is a Phosphoserine. The N-linked (GlcNAc...) asparagine glycan is linked to asparagine 455. Residues 458–529 (RKLSLQVIEP…PRVSIQSRPG (72 aa)) are disordered. Phosphoserine is present on residues serine 461 and serine 472. Asparagine 513, asparagine 543, and asparagine 568 each carry an N-linked (GlcNAc...) asparagine glycan. Serine 606 carries the phosphoserine modification. Basic and acidic residues predominate over residues 669–694 (DSESCESLKDSFGSGDRKRSNIDSNE). Disordered regions lie at residues 669 to 698 (DSES…HHHH) and 739 to 763 (ERSN…AYKD). Residues 740-749 (RSNSPENTRN) are compositionally biased toward polar residues.

Belongs to the PA-phosphatase related phosphoesterase family. Post-translationally, O-glycosylated. Probably at Ser-346. Expressed by glutamatergic neurons (at protein level).

Its subcellular location is the postsynaptic density membrane. Its function is as follows. Postsynaptic density membrane protein that indirectly regulates glutamatergic synaptic transmission through lysophosphatidic acid (LPA)-mediated signaling pathways. Binds lysophosphatidic acid (LPA) and mediates its internalization into cells. Could act as receptor or a transporter of this lipid at the post-synaptic membrane. Modulates lysophosphatidic acid (LPA) activity in neuron axonal outgrowth during development by attenuating phospholipid-induced axon collapse. The protein is Phospholipid phosphatase-related protein type 4 of Homo sapiens (Human).